Consider the following 290-residue polypeptide: Endoplasmic reticulum-Golgi intermediate compartment protein 1 (290 aa).

The Cytoplasmic portion of the chain corresponds to 1 to 26 (MPFDFRRFDIYRKVPKDLTQPTYTGA). A helical transmembrane segment spans residues 27 to 47 (IISICCCLFILFLFLSELTGF). At 48-254 (ITTEVVNELY…RRQPLYRFIT (207 aa)) the chain is on the lumenal side. N-linked (GlcNAc...) asparagine glycosylation is present at N74. A helical membrane pass occupies residues 255-275 (TICAIIGGTFTVAGILDSCIF). At 276-290 (TASEAWKKIQLGKIH) the chain is on the cytoplasmic side.

Belongs to the ERGIC family. May form a heteromeric complex composed of ERGIC1, ERGIC2 and ERGIC3. Within the complex, the interaction with ERGIC3 is direct. Interacts with ERGIC3/ERV46. N-glycosylated.

The protein localises to the endoplasmic reticulum membrane. The protein resides in the endoplasmic reticulum-Golgi intermediate compartment membrane. It is found in the golgi apparatus membrane. Possible role in transport between endoplasmic reticulum and Golgi. In Mus musculus (Mouse), this protein is Endoplasmic reticulum-Golgi intermediate compartment protein 1 (Ergic1).